The following is a 161-amino-acid chain: PRS fimbrial major pilin protein (161 aa).

Belongs to the fimbrial protein family.

The protein resides in the secreted. It localises to the fimbrium. Fimbriae (also called pili), polar filaments radiating from the surface of the bacterium to a length of 0.5-1.5 micrometers and numbering 100-300 per cell, enable bacteria to colonize the epithelium of specific host organs. The protein is PRS fimbrial major pilin protein (prsA) of Escherichia coli.